Consider the following 411-residue polypeptide: Ornithine cyclodeaminase (411 aa).

N236, A237, D315, T347, M348, L349, H350, D368, D391, and V392 together coordinate NAD(+).

This sequence belongs to the AgrE/ArgZ ornithine cyclodeaminase family. NAD(+) is required as a cofactor.

It carries out the reaction L-ornithine = L-proline + NH4(+). Functionally, catalyzes the conversion of ornithine to proline, with the release of ammonia. This Methanothermobacter thermautotrophicus (strain ATCC 29096 / DSM 1053 / JCM 10044 / NBRC 100330 / Delta H) (Methanobacterium thermoautotrophicum) protein is Ornithine cyclodeaminase.